The following is a 397-amino-acid chain: Enoyl-[acyl-carrier-protein] reductase [NADH] (397 aa).

NAD(+) is bound by residues 48–53 (GASTGY), 74–75 (FE), 111–112 (DA), and 139–140 (VA). Residue Y225 participates in substrate binding. The active-site Proton donor is Y235. Residues K244 and 273–275 (VVT) contribute to the NAD(+) site.

Belongs to the TER reductase family. Monomer.

It catalyses the reaction a 2,3-saturated acyl-[ACP] + NAD(+) = a (2E)-enoyl-[ACP] + NADH + H(+). Its pathway is lipid metabolism; fatty acid biosynthesis. In terms of biological role, involved in the final reduction of the elongation cycle of fatty acid synthesis (FAS II). Catalyzes the reduction of a carbon-carbon double bond in an enoyl moiety that is covalently linked to an acyl carrier protein (ACP). This is Enoyl-[acyl-carrier-protein] reductase [NADH] from Burkholderia thailandensis (strain ATCC 700388 / DSM 13276 / CCUG 48851 / CIP 106301 / E264).